The following is an 827-amino-acid chain: Periplasmic nitrate reductase (827 aa).

Residues 1 to 32 constitute a signal peptide (tat-type signal); it reads MTLSRRAFIKQTAAATAASAAGVVLPGVDALA. Positions 37–93 constitute a 4Fe-4S Mo/W bis-MGD-type domain; that stretch reads LTWSKAPCRFCGTGCGVSVGVKNGKVVATQGDPQAEVNRGLNCVKGYFLSKIMYGQD. [4Fe-4S] cluster contacts are provided by Cys-44, Cys-47, Cys-51, and Cys-79. Residues Lys-81, Gln-148, Asn-173, Cys-177, 241–245, 260–262, Met-371, Gln-375, Asn-481, 507–508, Lys-530, Asp-557, and 717–726 contribute to the Mo-bis(molybdopterin guanine dinucleotide) site; these read STFEH, QSD, SD, and TGRVLEHWHS. Trp-793 contacts substrate. Positions 801 and 818 each coordinate Mo-bis(molybdopterin guanine dinucleotide).

This sequence belongs to the prokaryotic molybdopterin-containing oxidoreductase family. NasA/NapA/NarB subfamily. Component of the periplasmic nitrate reductase NapAB complex composed of NapA and NapB. [4Fe-4S] cluster is required as a cofactor. Mo-bis(molybdopterin guanine dinucleotide) serves as cofactor. Predicted to be exported by the Tat system. The position of the signal peptide cleavage has not been experimentally proven.

It is found in the periplasm. It catalyses the reaction 2 Fe(II)-[cytochrome] + nitrate + 2 H(+) = 2 Fe(III)-[cytochrome] + nitrite + H2O. In terms of biological role, catalytic subunit of the periplasmic nitrate reductase complex NapAB. Receives electrons from NapB and catalyzes the reduction of nitrate to nitrite. The sequence is that of Periplasmic nitrate reductase from Paraburkholderia xenovorans (strain LB400).